Consider the following 133-residue polypeptide: Aspartate 1-decarboxylase (133 aa).

The active-site Schiff-base intermediate with substrate; via pyruvic acid is S26. The residue at position 26 (S26) is a Pyruvic acid (Ser). T58 contacts substrate. Y59 functions as the Proton donor in the catalytic mechanism. 74 to 76 (GAA) is a binding site for substrate.

Belongs to the PanD family. In terms of assembly, heterooctamer of four alpha and four beta subunits. Pyruvate is required as a cofactor. In terms of processing, is synthesized initially as an inactive proenzyme, which is activated by self-cleavage at a specific serine bond to produce a beta-subunit with a hydroxyl group at its C-terminus and an alpha-subunit with a pyruvoyl group at its N-terminus.

The protein localises to the cytoplasm. It catalyses the reaction L-aspartate + H(+) = beta-alanine + CO2. Its pathway is cofactor biosynthesis; (R)-pantothenate biosynthesis; beta-alanine from L-aspartate: step 1/1. Catalyzes the pyruvoyl-dependent decarboxylation of aspartate to produce beta-alanine. The polypeptide is Aspartate 1-decarboxylase (Legionella pneumophila (strain Lens)).